Here is a 390-residue protein sequence, read N- to C-terminus: Glutamate 5-kinase (390 aa).

ATP is bound at residue Lys-29. The substrate site is built by Ser-69, Asp-156, and Asn-168. 188 to 189 (TD) is an ATP binding site. In terms of domain architecture, PUA spans 295 to 374 (SGSLIVDAGA…EQFDRILGNN (80 aa)).

This sequence belongs to the glutamate 5-kinase family.

It localises to the cytoplasm. It carries out the reaction L-glutamate + ATP = L-glutamyl 5-phosphate + ADP. The protein operates within amino-acid biosynthesis; L-proline biosynthesis; L-glutamate 5-semialdehyde from L-glutamate: step 1/2. In terms of biological role, catalyzes the transfer of a phosphate group to glutamate to form L-glutamate 5-phosphate. The sequence is that of Glutamate 5-kinase from Psychrobacter arcticus (strain DSM 17307 / VKM B-2377 / 273-4).